The sequence spans 233 residues: 4'-phosphopantetheinyl transferase psf-1 (233 aa).

Mg(2+) is bound by residues Asp110, Glu112, and Glu154. The interval 161-192 (GKGISYGLSSFTARLSEDGQATLRLPDHEAPC) is peptidyl carrier protein binding.

The protein belongs to the P-Pant transferase superfamily. Gsp/Sfp/HetI/AcpT family. Mg(2+) serves as cofactor.

It carries out the reaction apo-[peptidyl-carrier protein] + CoA = holo-[peptidyl-carrier protein] + adenosine 3',5'-bisphosphate + H(+). In terms of biological role, probably activates the peptidyl carrier protein (PCP) domains of surfactin synthetase by transferring the 4'-phosphopantetheinyl moiety of coenzyme A (CoA) to a serine residue. Required for the production of the lipopeptide antibiotic, surfactin. This is 4'-phosphopantetheinyl transferase psf-1 (psf-1) from Bacillus pumilus (Bacillus mesentericus).